The sequence spans 231 residues: Maleylacetoacetate isomerase maiA (231 aa).

The 87-residue stretch at 7–93 (PKVTLYTYFR…YLEEITPASS (87 aa)) folds into the GST N-terminal domain. The 123-residue stretch at 102 to 224 (NPEARAVVRT…HWRTQPDTPE (123 aa)) folds into the GST C-terminal domain.

Belongs to the GST superfamily. Zeta family.

The enzyme catalyses 4-maleylacetoacetate = 4-fumarylacetoacetate. The protein operates within amino-acid degradation; L-phenylalanine degradation; acetoacetate and fumarate from L-phenylalanine: step 5/6. Its function is as follows. Maleylacetoacetate isomerase; part of the L-tyrosine degradation gene cluster that mediates the biosynthesis of the brownish pigment pyomelanin as an alternative melanin. The 4-hydroxyphenylpyruvate dioxygenase hppD catalyzes the conversion of 4-hydroxyphenylpyruvate to homogentisic acid (HGA). The protein hmgX is crucial for this conversion and thus, probably functions as an accessory factor to mediate specific activity of hppD. The homogentisate 1,2-dioxygenase hmgA is then involved in the cleavage of the aromatic ring of HGA and its conversion to 4-maleylacetoacetate. When hmgA activity is lowered by the cell wall integrity (CWI) signaling pathway, HGA accumulates and leads to the production of pyomelanin through benzoquinone acetic acid after oxidation and polymerization. On the opposite, in non-stress conditions, both hppD and hmgA activities are balanced and HGA is degraded into 4-maleylacetoacetate. 4-maleylacetoacetate is further converted to 4-fumarylacetoacetate by the maleylacetoacetate isomerase maiA, which is degraded into fumarate and acetoacetate by the fumarylacetoacetase fahA. The polypeptide is Maleylacetoacetate isomerase maiA (Aspergillus fumigatus (strain ATCC MYA-4609 / CBS 101355 / FGSC A1100 / Af293) (Neosartorya fumigata)).